Here is a 116-residue protein sequence, read N- to C-terminus: uncharacterized protein (116 aa).

The helical transmembrane segment at L5–F23 threads the bilayer.

It is found in the membrane. This is an uncharacterized protein from Saccharomyces cerevisiae (strain ATCC 204508 / S288c) (Baker's yeast).